The primary structure comprises 38 residues: GVPINVKCRGSPQCIQPCRDAGMRFGKCMNGKCHCTPQ.

3 disulfide bridges follow: C8-C28, C14-C33, and C18-C35. Residues 26–33 form an interaction with Ca(2+)-activated K(+) channels region; the sequence is GKCMNGKC.

In terms of tissue distribution, expressed by the venom gland.

Its subcellular location is the secreted. Its function is as follows. Potassium channel inhibitor. The polypeptide is Potassium channel toxin alpha-KTx 3.8 (Hottentotta tamulus sindicus (Scorpion)).